The primary structure comprises 68 residues: Large ribosomal subunit protein uL29 (68 aa).

A disordered region spans residues 32 to 68 (QDQLKRRTGSLDNPAERTQHRRDLARVLTVLTQKTKA). A compositionally biased stretch (basic and acidic residues) spans 45–56 (PAERTQHRRDLA).

Belongs to the universal ribosomal protein uL29 family.

The protein is Large ribosomal subunit protein uL29 of Myxococcus xanthus (strain DK1622).